We begin with the raw amino-acid sequence, 609 residues long: Dihydroxy-acid dehydratase (609 aa).

Residue Asp-81 participates in Mg(2+) binding. Cys-122 contacts [2Fe-2S] cluster. Positions 123 and 124 each coordinate Mg(2+). At Lys-124 the chain carries N6-carboxylysine. [2Fe-2S] cluster is bound at residue Cys-195. Glu-491 provides a ligand contact to Mg(2+). The Proton acceptor role is filled by Ser-517.

Belongs to the IlvD/Edd family. Homodimer. The cofactor is [2Fe-2S] cluster. Requires Mg(2+) as cofactor.

The catalysed reaction is (2R)-2,3-dihydroxy-3-methylbutanoate = 3-methyl-2-oxobutanoate + H2O. The enzyme catalyses (2R,3R)-2,3-dihydroxy-3-methylpentanoate = (S)-3-methyl-2-oxopentanoate + H2O. It functions in the pathway amino-acid biosynthesis; L-isoleucine biosynthesis; L-isoleucine from 2-oxobutanoate: step 3/4. Its pathway is amino-acid biosynthesis; L-valine biosynthesis; L-valine from pyruvate: step 3/4. Functionally, functions in the biosynthesis of branched-chain amino acids. Catalyzes the dehydration of (2R,3R)-2,3-dihydroxy-3-methylpentanoate (2,3-dihydroxy-3-methylvalerate) into 2-oxo-3-methylpentanoate (2-oxo-3-methylvalerate) and of (2R)-2,3-dihydroxy-3-methylbutanoate (2,3-dihydroxyisovalerate) into 2-oxo-3-methylbutanoate (2-oxoisovalerate), the penultimate precursor to L-isoleucine and L-valine, respectively. In Acinetobacter baumannii (strain AB0057), this protein is Dihydroxy-acid dehydratase.